Reading from the N-terminus, the 197-residue chain is Beta-crystallin A2 (197 aa).

The tract at residues 1-11 (MSSASAPGPAP) is N-terminal arm. Beta/gamma crystallin 'Greek key' domains are found at residues 12–52 (ACLT…KVEN) and 53–99 (GAWV…RPVL). Residues 100–105 (CANHSD) form a connecting peptide region. 2 consecutive Beta/gamma crystallin 'Greek key' domains span residues 106 to 147 (SRVT…KVSS) and 148 to 196 (GAWV…RRVQ).

Belongs to the beta/gamma-crystallin family. Homo/heterodimer, or complexes of higher-order. The structure of beta-crystallin oligomers seems to be stabilized through interactions between the N-terminal arms.

In terms of biological role, crystallins are the dominant structural components of the vertebrate eye lens. The sequence is that of Beta-crystallin A2 (CRYBA2) from Oryctolagus cuniculus (Rabbit).